The sequence spans 167 residues: Insertion element IS1 2 protein InsB (167 aa).

Belongs to the transposase 27 family.

Absolutely required for transposition of IS1. The protein is Insertion element IS1 2 protein InsB (insB2) of Escherichia coli (strain K12).